A 187-amino-acid polypeptide reads, in one-letter code: MRSRSFLVLVAVFLICETLVAQRLDRIRGPKGQGQDPVEGQDQDEGPGPVKVEILDIGQDPVKGQDPVKGQDPVKGQDPVKGQDLVKSQDPVKAELPDIGQDVVKGHEPVEGQDPVNAQLPDKVQDPVKAQPAVPGRFLLSKRGHCPRILFRCPLSNPSNKCWRDYDCPGVKKCCEGFCGKDCLYPK.

The N-terminal stretch at 1-21 is a signal peptide; that stretch reads MRSRSFLVLVAVFLICETLVA. Glutamine 22 is subject to Pyrrolidone carboxylic acid. Residues 22-126 constitute a propeptide that is removed on maturation; the sequence is QRLDRIRGPK…NAQLPDKVQD (105 aa). Residues 28 to 98 form a disordered region; that stretch reads RGPKGQGQDP…QDPVKAELPD (71 aa). A run of 14 repeats spans residues 34 to 39, 40 to 45, 46 to 51, 58 to 63, 64 to 69, 70 to 75, 76 to 81, 82 to 87, 88 to 93, 100 to 105, 106 to 111, 112 to 117, 118 to 123, and 124 to 129. The segment at 34–129 is 14 X 6 AA approximate tandem repeats; the sequence is GQDPVEGQDQ…LPDKVQDPVK (96 aa). The stretch at 64–85 is one SVP-1 clotting 1 repeat; the sequence is GQDPVKGQDPVKGQDPVKGQDL. The 49-residue stretch at 139–187 folds into the WAP domain; that stretch reads LLSKRGHCPRILFRCPLSNPSNKCWRDYDCPGVKKCCEGFCGKDCLYPK. 4 cysteine pairs are disulfide-bonded: cysteine 146–cysteine 175, cysteine 153–cysteine 179, cysteine 162–cysteine 174, and cysteine 168–cysteine 183.

Post-translationally, the short form (AA 127-187) may be an artifact due to the strongly acidic conditions of the duodenum. The pro-SPAI form may be the native form. Small intestine &gt; large intestine. The plasma contains the pro-SPAI form circulating.

In terms of biological role, inhibits Na(+),K(+) ATPase by the competitive mode against Na(+). The chain is Sodium/potassium ATPase inhibitor SPAI-2 from Sus scrofa (Pig).